The primary structure comprises 343 residues: Pseudaminic acid synthase (343 aa).

The region spanning 287–343 is the AFP-like domain; sequence SLYASKDIKKGEIFSEENVKSVRPSFGLHPKFYQELLGKKASKDIEFGDALKESDFR.

It belongs to the pseudaminic acid synthase family. A divalent metal cation is required as a cofactor.

It catalyses the reaction 2,4-diacetamido-2,4,6-trideoxy-beta-L-altrose + phosphoenolpyruvate + H2O = pseudaminate + phosphate. In terms of biological role, catalyzes the fifth step in the biosynthesis of pseudaminic acid, a sialic-acid-like sugar that is used to modify flagellin. Catalyzes the condensation of phosphoenolpyruvate with 2,4-diacetamido-2,4,6-trideoxy-beta-l-altropyranose, forming pseudaminic acid. The polypeptide is Pseudaminic acid synthase (pseI) (Campylobacter jejuni subsp. jejuni serotype O:23/36 (strain 81-176)).